A 570-amino-acid chain; its full sequence is Dihydroxy-acid dehydratase (570 aa).

C61 provides a ligand contact to [2Fe-2S] cluster. Position 94 (D94) interacts with Mg(2+). Position 135 (C135) interacts with [2Fe-2S] cluster. D136 and K137 together coordinate Mg(2+). K137 is modified (N6-carboxylysine). C207 is a binding site for [2Fe-2S] cluster. Position 459 (E459) interacts with Mg(2+). The active-site Proton acceptor is the S485.

This sequence belongs to the IlvD/Edd family. As to quaternary structure, homodimer. It depends on [2Fe-2S] cluster as a cofactor. Requires Mg(2+) as cofactor.

The enzyme catalyses (2R)-2,3-dihydroxy-3-methylbutanoate = 3-methyl-2-oxobutanoate + H2O. It carries out the reaction (2R,3R)-2,3-dihydroxy-3-methylpentanoate = (S)-3-methyl-2-oxopentanoate + H2O. Its pathway is amino-acid biosynthesis; L-isoleucine biosynthesis; L-isoleucine from 2-oxobutanoate: step 3/4. The protein operates within amino-acid biosynthesis; L-valine biosynthesis; L-valine from pyruvate: step 3/4. Its function is as follows. Functions in the biosynthesis of branched-chain amino acids. Catalyzes the dehydration of (2R,3R)-2,3-dihydroxy-3-methylpentanoate (2,3-dihydroxy-3-methylvalerate) into 2-oxo-3-methylpentanoate (2-oxo-3-methylvalerate) and of (2R)-2,3-dihydroxy-3-methylbutanoate (2,3-dihydroxyisovalerate) into 2-oxo-3-methylbutanoate (2-oxoisovalerate), the penultimate precursor to L-isoleucine and L-valine, respectively. The sequence is that of Dihydroxy-acid dehydratase from Lactococcus lactis subsp. cremoris (strain SK11).